We begin with the raw amino-acid sequence, 389 residues long: MSNMVLNGNIDKSDRNSILDILQSLENIAWGQPGSARCDFRSDVITRPSLRMLSAVLKTTLGDDVFREDLTTAHFEAHVAEISGREEGMFVITGTMANQLCLHALVSTRPCGILLSSESHAIHYEAGGSSMLSGAMLQPVQPSNGKYLRVEDLEEHAILTDDVHKCPTSIVSMENTAGGAVVPVHELRRIRDWAKQNNVRTHLDGARLFEAVATGAGTLKEYCSLIDLVSVDFSKNLGAPMGAMILGDKKLIQQMRRTRKGIGGGMRQGGVITAAAREALFENFGLGAEIESQTLLQVHKVAKRLGEEWTRKGGKLSKEIETNIIWLDLDAVGIKKSQFIDKGREYGVILDGCRIVCHHQIDIYAVEALIDVFHDILKADPIKNKNSDR.

Residue K235 is modified to N6-(pyridoxal phosphate)lysine.

This sequence belongs to the threonine aldolase family. Pyridoxal 5'-phosphate is required as a cofactor.

It catalyses the reaction L-alanine = D-alanine. Its pathway is mycotoxin biosynthesis; HC-toxin biosynthesis. Alanine racemase, part of the diffuse TOX2 gene cluster that mediates the biosynthesis of the HC-toxin, cyclic tetrapeptide of structure cyclo(D-Pro-L-Ala-D-Ala-L-Aeo), where Aeo stands for 2-amino-9,10-epoxi-8-oxodecanoic acid. HC-toxin is a determinant of specificity and virulence in the interaction between the producing fungus and its host, maize. TOXG catalyzes the conversion of L-alanine into D-alanine, an essential precursor for the production of the major forms of HC-toxin by the non-ribosomal peptide synthetase HTS1. The sequence is that of Alanine racemase TOXG from Cochliobolus carbonum (Maize leaf spot fungus).